Reading from the N-terminus, the 511-residue chain is Probable pectinesterase/pectinesterase inhibitor 17 (511 aa).

Positions 1–23 (MMAFRAYIINFVILCILVASTVS) are cleaved as a signal peptide. The interval 24-171 (GYNQKDVKAW…SNLLCNTLAI (148 aa)) is pectinesterase inhibitor 17. N-linked (GlcNAc...) asparagine glycosylation is found at Asn-112 and Asn-160. A pectinesterase 17 region spans residues 237–414 (VKQGVYSENL…LRPVLGSTKT (178 aa)). 2 residues coordinate substrate: Thr-277 and Gln-307. Asp-330 serves as the catalytic Proton donor; for pectinesterase activity. A disulfide bridge connects residues Cys-344 and Cys-364. Residue Asp-351 is the Nucleophile; for pectinesterase activity of the active site. Substrate contacts are provided by Arg-418 and Trp-420.

The protein in the N-terminal section; belongs to the PMEI family. This sequence in the C-terminal section; belongs to the pectinesterase family. Expressed in siliques.

Its subcellular location is the secreted. It is found in the cell wall. It carries out the reaction [(1-&gt;4)-alpha-D-galacturonosyl methyl ester](n) + n H2O = [(1-&gt;4)-alpha-D-galacturonosyl](n) + n methanol + n H(+). It functions in the pathway glycan metabolism; pectin degradation; 2-dehydro-3-deoxy-D-gluconate from pectin: step 1/5. Acts in the modification of cell walls via demethylesterification of cell wall pectin. In Arabidopsis thaliana (Mouse-ear cress), this protein is Probable pectinesterase/pectinesterase inhibitor 17 (PME17).